A 215-amino-acid polypeptide reads, in one-letter code: Cytochrome b6 (215 aa).

The helical transmembrane segment at 32–52 (IFYCLGGITFTCFIIQVATGF) threads the bilayer. Cys35 contacts heme c. Positions 86 and 100 each coordinate heme b. 3 consecutive transmembrane segments (helical) span residues 90–110 (ASMM…TGGF), 116–136 (LTWV…VTGY), and 186–206 (LHTF…FLMI). His187 and His202 together coordinate heme b.

This sequence belongs to the cytochrome b family. PetB subfamily. As to quaternary structure, the 4 large subunits of the cytochrome b6-f complex are cytochrome b6, subunit IV (17 kDa polypeptide, PetD), cytochrome f and the Rieske protein, while the 4 small subunits are PetG, PetL, PetM and PetN. The complex functions as a dimer. Requires heme b as cofactor. Heme c is required as a cofactor.

It localises to the plastid. It is found in the chloroplast thylakoid membrane. Component of the cytochrome b6-f complex, which mediates electron transfer between photosystem II (PSII) and photosystem I (PSI), cyclic electron flow around PSI, and state transitions. The protein is Cytochrome b6 of Euglena gracilis.